The chain runs to 307 residues: Olfactory receptor 5M3 (307 aa).

Topologically, residues 1–23 (MLNFTDVTEFILLGLTSRREWQV) are extracellular. A glycan (N-linked (GlcNAc...) asparagine) is linked at Asn3. The helical transmembrane segment at 24–44 (LFFIIFLVVYIITMVGNIGMM) threads the bilayer. The Cytoplasmic portion of the chain corresponds to 45 to 52 (VLIKVSPQ). Residues 53–73 (LNNPMYFFLSHLSFVDVWFSS) form a helical membrane-spanning segment. Residues 74 to 97 (NVTPKMLENLLSDKKTITYAGCLV) are Extracellular-facing. Residues Cys95 and Cys187 are joined by a disulfide bond. Residues 98–118 (QCFFFIALVHVEIFILAAMAF) form a helical membrane-spanning segment. Residues 119–137 (DRYMAIGNPLLYGSKMSRV) lie on the Cytoplasmic side of the membrane. A helical transmembrane segment spans residues 138 to 158 (VCIRLITFPYIYGFLTSLAAT). Over 159 to 194 (LWTYGLYFCGKIEINHFYCADPPLIKMACAGTFVKE) the chain is Extracellular. The helical transmembrane segment at 195–215 (YTMIILAGINFTYSLTVIIIS) threads the bilayer. At 216 to 235 (YLFILIAILRMRSAEGRQKA) the chain is on the cytoplasmic side. Residues 236–256 (FSTCGSHLTAVIIFYGTLIFM) form a helical membrane-spanning segment. Topologically, residues 257–269 (YLRRPTEESVEQG) are extracellular. Residues 270 to 290 (KMVAVFYTTVIPMLNPMIYSL) form a helical membrane-spanning segment. Residues 291 to 307 (RNKDVKKAMMKVISRSC) are Cytoplasmic-facing.

This sequence belongs to the G-protein coupled receptor 1 family.

The protein localises to the cell membrane. Odorant receptor. The protein is Olfactory receptor 5M3 (OR5M3) of Homo sapiens (Human).